Consider the following 475-residue polypeptide: Ribulose bisphosphate carboxylase large chain (475 aa).

Residues 1 to 2 (MS) constitute a propeptide that is removed on maturation. Pro3 carries the post-translational modification N-acetylproline. Lys14 is modified (N6,N6,N6-trimethyllysine). Substrate is bound by residues Asn123 and Thr173. Lys175 serves as the catalytic Proton acceptor. Substrate is bound at residue Lys177. Lys201, Asp203, and Glu204 together coordinate Mg(2+). The residue at position 201 (Lys201) is an N6-carboxylysine. The Proton acceptor role is filled by His294. Substrate is bound by residues Arg295, His327, and Ser379.

It belongs to the RuBisCO large chain family. Type I subfamily. In terms of assembly, heterohexadecamer of 8 large chains and 8 small chains; disulfide-linked. The disulfide link is formed within the large subunit homodimers. Mg(2+) serves as cofactor. The disulfide bond which can form in the large chain dimeric partners within the hexadecamer appears to be associated with oxidative stress and protein turnover.

The protein localises to the plastid. Its subcellular location is the chloroplast. It carries out the reaction 2 (2R)-3-phosphoglycerate + 2 H(+) = D-ribulose 1,5-bisphosphate + CO2 + H2O. The enzyme catalyses D-ribulose 1,5-bisphosphate + O2 = 2-phosphoglycolate + (2R)-3-phosphoglycerate + 2 H(+). In terms of biological role, ruBisCO catalyzes two reactions: the carboxylation of D-ribulose 1,5-bisphosphate, the primary event in carbon dioxide fixation, as well as the oxidative fragmentation of the pentose substrate in the photorespiration process. Both reactions occur simultaneously and in competition at the same active site. In Platanus occidentalis (Sycamore), this protein is Ribulose bisphosphate carboxylase large chain.